A 340-amino-acid chain; its full sequence is Ketol-acid reductoisomerase (NADP(+)) (340 aa).

The region spanning 3–182 (VEMLYEADVK…GSARVGLLVT (180 aa)) is the KARI N-terminal Rossmann domain. NADP(+) contacts are provided by residues 26-29 (YGSQ), arginine 49, serine 53, and 83-86 (DEIQ). Histidine 108 is a catalytic residue. Glycine 134 contacts NADP(+). Residues 183–328 (TFKEETEEDL…AELRKAMPFV (146 aa)) enclose the KARI C-terminal knotted domain. Residues aspartate 191, glutamate 195, glutamate 227, and glutamate 231 each coordinate Mg(2+). Serine 252 contributes to the substrate binding site.

The protein belongs to the ketol-acid reductoisomerase family. Mg(2+) serves as cofactor.

The enzyme catalyses (2R)-2,3-dihydroxy-3-methylbutanoate + NADP(+) = (2S)-2-acetolactate + NADPH + H(+). It catalyses the reaction (2R,3R)-2,3-dihydroxy-3-methylpentanoate + NADP(+) = (S)-2-ethyl-2-hydroxy-3-oxobutanoate + NADPH + H(+). It participates in amino-acid biosynthesis; L-isoleucine biosynthesis; L-isoleucine from 2-oxobutanoate: step 2/4. It functions in the pathway amino-acid biosynthesis; L-valine biosynthesis; L-valine from pyruvate: step 2/4. Involved in the biosynthesis of branched-chain amino acids (BCAA). Catalyzes an alkyl-migration followed by a ketol-acid reduction of (S)-2-acetolactate (S2AL) to yield (R)-2,3-dihydroxy-isovalerate. In the isomerase reaction, S2AL is rearranged via a Mg-dependent methyl migration to produce 3-hydroxy-3-methyl-2-ketobutyrate (HMKB). In the reductase reaction, this 2-ketoacid undergoes a metal-dependent reduction by NADPH to yield (R)-2,3-dihydroxy-isovalerate. This chain is Ketol-acid reductoisomerase (NADP(+)), found in Streptococcus mutans serotype c (strain ATCC 700610 / UA159).